The primary structure comprises 543 residues: CTP synthase (543 aa).

Positions 1–265 (MARYIFITGG…DDEVLAAFAI (265 aa)) are amidoligase domain. Serine 13 provides a ligand contact to CTP. Residue serine 13 coordinates UTP. 14 to 19 (SLGKGL) lines the ATP pocket. Tyrosine 54 contacts L-glutamine. ATP is bound at residue aspartate 71. Residues aspartate 71 and glutamate 139 each coordinate Mg(2+). Residues 146 to 148 (DIE), 186 to 191 (KTKPTQ), and lysine 222 each bind CTP. Residues 186–191 (KTKPTQ) and lysine 222 each bind UTP. An ATP-binding site is contributed by 238–240 (RDA). The 252-residue stretch at 291-542 (TIAIVGKYTG…VQAALVQSRL (252 aa)) folds into the Glutamine amidotransferase type-1 domain. Glycine 353 contributes to the L-glutamine binding site. Catalysis depends on cysteine 380, which acts as the Nucleophile; for glutamine hydrolysis. L-glutamine contacts are provided by residues 381-384 (FGMQ), glutamate 404, and arginine 470. Catalysis depends on residues histidine 515 and glutamate 517.

It belongs to the CTP synthase family. As to quaternary structure, homotetramer.

It catalyses the reaction UTP + L-glutamine + ATP + H2O = CTP + L-glutamate + ADP + phosphate + 2 H(+). It carries out the reaction L-glutamine + H2O = L-glutamate + NH4(+). The enzyme catalyses UTP + NH4(+) + ATP = CTP + ADP + phosphate + 2 H(+). The protein operates within pyrimidine metabolism; CTP biosynthesis via de novo pathway; CTP from UDP: step 2/2. Its activity is regulated as follows. Allosterically activated by GTP, when glutamine is the substrate; GTP has no effect on the reaction when ammonia is the substrate. The allosteric effector GTP functions by stabilizing the protein conformation that binds the tetrahedral intermediate(s) formed during glutamine hydrolysis. Inhibited by the product CTP, via allosteric rather than competitive inhibition. Functionally, catalyzes the ATP-dependent amination of UTP to CTP with either L-glutamine or ammonia as the source of nitrogen. Regulates intracellular CTP levels through interactions with the four ribonucleotide triphosphates. This is CTP synthase from Rhodopseudomonas palustris (strain ATCC BAA-98 / CGA009).